A 1338-amino-acid polypeptide reads, in one-letter code: ABC-type transporter kk1G (1338 aa).

Residues 1-21 (MSAIELPPLRSRSEEAARAEH) are disordered. Residues 11 to 21 (SRSEEAARAEH) show a composition bias toward basic and acidic residues. A run of 6 helical transmembrane segments spans residues 75 to 95 (YFLISLCCFTSIGAGTAMPLM), 130 to 150 (LYIFYLFIGKFAMSYISMLAI), 203 to 223 (HFATLFQSLAFTVGLYVVALV), 230 to 250 (LIASTGLPFILIVYGAMFPPF), 312 to 332 (TMSPAMVAMYGIFGITFWFGI), and 340 to 360 (ISSVGDITVVLFSVMMAVMNI). In terms of domain architecture, ABC transmembrane type-1 1 spans 80 to 372 (LCCFTSIGAG…VASPIISIAK (293 aa)). Residues 405-706 (ITFINVAFSY…GDGVYYGLVH (302 aa)) form the ABC transporter 1 domain. 440-447 (GPSGSGKS) serves as a coordination point for ATP. Disordered stretches follow at residues 473 to 518 (EIPS…TCTG) and 715 to 747 (EDDDDHSSSLENIKMNDTKEDTASSGFEGHASR). 6 helical membrane passes run 777–797 (VCCIGILGAGAVYPLQAYIFA), 816–836 (FWAGMFGVLAGGVGLSYYLLG), 895–917 (MSMALIACTNLLGCTIIAFVYGW), 919–941 (LSLVGLFAALPLILGAGLVRTRL), 1003–1023 (IIFAASDSLELACMSLTFWYG), and 1037–1057 (FFIVYTAIIQGATAAGIWFSF). The ABC transmembrane type-1 2 domain occupies 777 to 1063 (VCCIGILGAG…WFSFTPSMAQ (287 aa)). The ABC transporter 2 domain occupies 1096-1333 (IEFQHVSFKY…KGVYWQMCQA (238 aa)). Residue 1130–1137 (GSSGCGKS) coordinates ATP.

It belongs to the ABC transporter superfamily. ABCB family. Multidrug resistance exporter (TC 3.A.1.201) subfamily.

The protein localises to the cell membrane. It functions in the pathway secondary metabolite biosynthesis. Its function is as follows. ABC transporter; part of the gene cluster that mediates the biosynthesis of KK-1, a novel cyclic depsipeptide with 10 residues which is a promising active compound with high activity against many plant pathogens, especially Botrytis cinerea. Is probably directly involved in the secretion of KK-1 and thus confers self-tolerance against KK-1. The sequence is that of ABC-type transporter kk1G from Curvularia clavata.